The primary structure comprises 697 residues: Polyribonucleotide nucleotidyltransferase (697 aa).

Residues aspartate 486 and aspartate 492 each contribute to the Mg(2+) site. In terms of domain architecture, KH spans proline 553–isoleucine 612. The S1 motif domain maps to glycine 622–lysine 690.

It belongs to the polyribonucleotide nucleotidyltransferase family. In terms of assembly, component of the RNA degradosome, which is a multiprotein complex involved in RNA processing and mRNA degradation. Requires Mg(2+) as cofactor.

Its subcellular location is the cytoplasm. It carries out the reaction RNA(n+1) + phosphate = RNA(n) + a ribonucleoside 5'-diphosphate. Functionally, involved in mRNA degradation. Catalyzes the phosphorolysis of single-stranded polyribonucleotides processively in the 3'- to 5'-direction. The polypeptide is Polyribonucleotide nucleotidyltransferase (Baumannia cicadellinicola subsp. Homalodisca coagulata).